A 398-amino-acid chain; its full sequence is UDP-N-acetylglucosamine--N-acetylmuramyl-(pentapeptide) pyrophosphoryl-undecaprenol N-acetylglucosamine transferase (398 aa).

UDP-N-acetyl-alpha-D-glucosamine contacts are provided by residues Thr15–Gly17, Asn125, Arg168, Ser196, and Gln297.

Belongs to the glycosyltransferase 28 family. MurG subfamily.

It localises to the cell inner membrane. It catalyses the reaction di-trans,octa-cis-undecaprenyl diphospho-N-acetyl-alpha-D-muramoyl-L-alanyl-D-glutamyl-meso-2,6-diaminopimeloyl-D-alanyl-D-alanine + UDP-N-acetyl-alpha-D-glucosamine = di-trans,octa-cis-undecaprenyl diphospho-[N-acetyl-alpha-D-glucosaminyl-(1-&gt;4)]-N-acetyl-alpha-D-muramoyl-L-alanyl-D-glutamyl-meso-2,6-diaminopimeloyl-D-alanyl-D-alanine + UDP + H(+). Its pathway is cell wall biogenesis; peptidoglycan biosynthesis. In terms of biological role, cell wall formation. Catalyzes the transfer of a GlcNAc subunit on undecaprenyl-pyrophosphoryl-MurNAc-pentapeptide (lipid intermediate I) to form undecaprenyl-pyrophosphoryl-MurNAc-(pentapeptide)GlcNAc (lipid intermediate II). The sequence is that of UDP-N-acetylglucosamine--N-acetylmuramyl-(pentapeptide) pyrophosphoryl-undecaprenol N-acetylglucosamine transferase from Erythrobacter litoralis (strain HTCC2594).